The sequence spans 316 residues: Adenine deaminase (316 aa).

Zn(2+) is bound by residues histidine 14, histidine 16, and histidine 194. Residue glutamate 197 is the Proton donor of the active site. Aspartate 275 serves as a coordination point for Zn(2+). Aspartate 276 lines the substrate pocket.

Belongs to the metallo-dependent hydrolases superfamily. Adenosine and AMP deaminases family. Adenine deaminase type 2 subfamily. Zn(2+) is required as a cofactor.

It catalyses the reaction adenine + H2O + H(+) = hypoxanthine + NH4(+). In terms of biological role, catalyzes the hydrolytic deamination of adenine to hypoxanthine. Plays an important role in the purine salvage pathway and in nitrogen catabolism. In Pseudomonas aeruginosa (strain LESB58), this protein is Adenine deaminase.